The sequence spans 74 residues: Cytoplasmic envelopment protein 3 (74 aa).

A lipid anchor (N-myristoyl glycine; by host) is attached at glycine 2. The Di-leucine-like internalization motif signature appears at 15-16; sequence LV. The segment at 34-40 is asp/Glu-rich (acidic); the sequence is SMEEFDI. The tract at residues 36–74 is disordered; sequence EEFDIPPPPPLPKPVFKQPGPYKIPARSQRCPSKRRDPY.

It belongs to the herpesviridae cytoplasmic envelopment protein 3 family. Interacts with cytoplasmic envelopment protein 2; this interaction is essential for the proper localization of each protein to the assembly complex and thus for the production of infectious virus. Post-translationally, myristoylation and palmitoylation (probably on one or more of the nearby cysteines at the N-terminus) enable membrane-binding and Golgi apparatus-specific targeting and are essential for efficient packaging. Phosphorylated. Phosphorylation does not seem to be required for recycling to the host Golgi apparatus. Packaging is selective for underphosphorylated forms.

The protein localises to the virion tegument. The protein resides in the virion membrane. It localises to the host cell membrane. It is found in the host Golgi apparatus membrane. Functionally, plays an important role in the cytoplasmic envelopment of tegument proteins and capsids during the assembly and egress processes. Also participates in viral entry at the fusion step probably by regulating the core fusion machinery. In Equine herpesvirus 1 (strain Ab4p) (EHV-1), this protein is Cytoplasmic envelopment protein 3.